The chain runs to 152 residues: SUZ RNA-binding domain-containing (152 aa).

N-acetylmethionine is present on Met1. A disordered region spans residues 30 to 152 (TQKESRKSKS…DGSQGFKQRR (123 aa)). A phosphoserine mark is found at Ser37, Ser39, and Ser51. One can recognise an SUZ domain in the interval 42 to 107 (KVPIVIQDDS…ARRRILGSAS (66 aa)). Positions 66 to 80 (PTSNGVVSSPNSTSR) are enriched in polar residues. Residues 89-100 (AQREAEYAEARR) are compositionally biased toward basic and acidic residues. A phosphoserine mark is found at Ser105 and Ser107. One can recognise an SUZ-C domain in the interval 111–152 (EQEKPILDRPTRISQPEDSRQPSNVIRQPLGPDGSQGFKQRR). Residues 113-130 (EKPILDRPTRISQPEDSR) are compositionally biased toward basic and acidic residues.

This sequence belongs to the SZRD1 family.

The polypeptide is SUZ RNA-binding domain-containing (Szrd1) (Mus musculus (Mouse)).